Reading from the N-terminus, the 643-residue chain is Clathrin interactor 1 (643 aa).

Residues 16-149 (NVVMNYSEIE…QDDDRLREER (134 aa)) enclose the ENTH domain. R29 provides a ligand contact to a 1,2-diacyl-sn-glycero-3-phospho-(1D-myo-inositol-4,5-bisphosphate). The interaction with VTI1B stretch occupies residues 52-54 (FMY). Residue R67 coordinates a 1,2-diacyl-sn-glycero-3-phospho-(1D-myo-inositol-4,5-bisphosphate). 2 interaction with VTI1B regions span residues 94 to 96 (SER) and 142 to 153 (DDRLREERKKAK). S163, S166, S173, S205, S210, S227, S245, and S299 each carry phosphoserine. The tract at residues 219–331 (FRRKDREDSP…SSGDLVDLFD (113 aa)) is disordered. Residues 222–239 (KDREDSPERCSDSDEEKK) show a composition bias toward basic and acidic residues. Residues 300-310 (PDQNASTHTPQ) show a composition bias toward polar residues. Residue T308 is modified to Phosphothreonine. The segment covering 311 to 323 (SSLKTSVPSSKSS) has biased composition (low complexity). Phosphoserine is present on residues S312 and S642.

Belongs to the epsin family. As to quaternary structure, binds clathrin heavy chain and AP-2. Interacts with VTI1B. Interacts with GGA2 (via GAE domain). Interacts with AP1G1 (via GAE domain). Interacts with AP1G2 (via GAE domain).

The protein localises to the cytoplasm. Its subcellular location is the perinuclear region. It localises to the membrane. It is found in the cytoplasmic vesicle. The protein resides in the clathrin-coated vesicle. Its function is as follows. Binds to membranes enriched in phosphatidylinositol 4,5-bisphosphate (PtdIns(4,5)P2). May have a role in transport via clathrin-coated vesicles from the trans-Golgi network to endosomes. Stimulates clathrin assembly. The chain is Clathrin interactor 1 (CLINT1) from Bos taurus (Bovine).